A 294-amino-acid polypeptide reads, in one-letter code: Foldase protein PrsA 1 (294 aa).

Positions 1 to 21 (MTKLKKVMISVIAATLLLLAG) are cleaved as a signal peptide. Cys22 carries N-palmitoyl cysteine lipidation. Cys22 is lipidated: S-diacylglycerol cysteine. Residues 135–226 (EPDITVRHIL…YGYHLIQLVK (92 aa)) form the PpiC domain.

The protein belongs to the PrsA family.

The protein localises to the cell membrane. The catalysed reaction is [protein]-peptidylproline (omega=180) = [protein]-peptidylproline (omega=0). In terms of biological role, plays a major role in protein secretion by helping the post-translocational extracellular folding of several secreted proteins. This Listeria monocytogenes serovar 1/2a (strain ATCC BAA-679 / EGD-e) protein is Foldase protein PrsA 1 (prsA1).